Here is a 234-residue protein sequence, read N- to C-terminus: Glucosamine-6-phosphate deaminase (234 aa).

Aspartate 62 (proton acceptor; for enolization step) is an active-site residue. Residue asparagine 128 is the For ring-opening step of the active site. The active-site Proton acceptor; for ring-opening step is the histidine 130. Residue glutamate 135 is the For ring-opening step of the active site.

It belongs to the glucosamine/galactosamine-6-phosphate isomerase family. NagB subfamily.

The enzyme catalyses alpha-D-glucosamine 6-phosphate + H2O = beta-D-fructose 6-phosphate + NH4(+). Its pathway is amino-sugar metabolism; N-acetylneuraminate degradation; D-fructose 6-phosphate from N-acetylneuraminate: step 5/5. Its function is as follows. Catalyzes the reversible isomerization-deamination of glucosamine 6-phosphate (GlcN6P) to form fructose 6-phosphate (Fru6P) and ammonium ion. In Streptococcus pyogenes serotype M1, this protein is Glucosamine-6-phosphate deaminase.